Reading from the N-terminus, the 228-residue chain is MKSTRPFHPTPVITIDGPTASGKGTVAALVAAHLGFHLLDSGALYRLAALASIRYQVEPNDADALAKLVDGLHITFREGCAQLDGVDVSDEIRAEAVGNRASAIAVHAPVRAALVARQRAFRKTPGLVADGRDMGTVIFPDAVLKVFLTASVEARAARRHKQLMQKGFSANMDNLLQDLRERDARDSNRAAAPLKPAADAKPLDTSALTIEQSVEQVLAWYRELGQPA.

17 to 25 (GPTASGKGT) is a binding site for ATP.

The protein belongs to the cytidylate kinase family. Type 1 subfamily.

It is found in the cytoplasm. The enzyme catalyses CMP + ATP = CDP + ADP. It catalyses the reaction dCMP + ATP = dCDP + ADP. This chain is Cytidylate kinase, found in Burkholderia thailandensis (strain ATCC 700388 / DSM 13276 / CCUG 48851 / CIP 106301 / E264).